Here is a 142-residue protein sequence, read N- to C-terminus: Large ribosomal subunit protein mL42 (142 aa).

The N-terminal 32 residues, 1–32 (MALAAVKWAISSRTMLKHLFPVENGALYCVGH), are a transit peptide targeting the mitochondrion.

Belongs to the mitochondrion-specific ribosomal protein mL42 family. As to quaternary structure, component of the mitochondrial ribosome large subunit (39S) which comprises a 16S rRNA and about 50 distinct proteins. Component of the mitochondrial ribosome small subunit (28S) which comprises a 12S rRNA and about 30 distinct proteins.

It localises to the mitochondrion. The sequence is that of Large ribosomal subunit protein mL42 (MRPL42) from Bos taurus (Bovine).